Here is a 595-residue protein sequence, read N- to C-terminus: Chaperone protein HscA homolog (595 aa).

Belongs to the heat shock protein 70 family.

Functionally, chaperone involved in the maturation of iron-sulfur cluster-containing proteins. Has a low intrinsic ATPase activity which is markedly stimulated by HscB. In Rickettsia akari (strain Hartford), this protein is Chaperone protein HscA homolog.